The following is a 322-amino-acid chain: Biotin synthase (322 aa).

Residues 39–266 (NQVQISSLLN…KSVVRLSAGR (228 aa)) enclose the Radical SAM core domain. Cysteine 54, cysteine 58, and cysteine 61 together coordinate [4Fe-4S] cluster. Residues cysteine 98, cysteine 129, cysteine 189, and arginine 261 each contribute to the [2Fe-2S] cluster site.

The protein belongs to the radical SAM superfamily. Biotin synthase family. In terms of assembly, homodimer. It depends on [4Fe-4S] cluster as a cofactor. [2Fe-2S] cluster serves as cofactor.

It carries out the reaction (4R,5S)-dethiobiotin + (sulfur carrier)-SH + 2 reduced [2Fe-2S]-[ferredoxin] + 2 S-adenosyl-L-methionine = (sulfur carrier)-H + biotin + 2 5'-deoxyadenosine + 2 L-methionine + 2 oxidized [2Fe-2S]-[ferredoxin]. The protein operates within cofactor biosynthesis; biotin biosynthesis; biotin from 7,8-diaminononanoate: step 2/2. Its function is as follows. Catalyzes the conversion of dethiobiotin (DTB) to biotin by the insertion of a sulfur atom into dethiobiotin via a radical-based mechanism. The chain is Biotin synthase from Vesicomyosocius okutanii subsp. Calyptogena okutanii (strain HA).